The following is an 886-amino-acid chain: DNA double-strand break repair Rad50 ATPase (886 aa).

ATP-binding positions include 32 to 38 and Gln137; that span reads NGAGKSS. 2 coiled-coil regions span residues 181–240 and 320–416; these read IRSL…KEIK and RKKE…GDLN. Residues 391-489 form the Zinc-hook domain; it reads IKDVSDRINQ…EREELEATRN (99 aa). Residues Cys437 and Cys440 each contribute to the Zn(2+) site. Coiled-coil stretches lie at residues 450–657 and 682–718; these read AKIR…ISEL and EADK…EESK.

The protein belongs to the SMC family. RAD50 subfamily. Homodimer. Forms a heterotetramer composed of two Mre11 subunits and two Rad50 subunits. Interacts with Mre11 and HerA. The cofactor is Zn(2+).

Functionally, part of the Rad50/Mre11 complex, which is involved in the early steps of DNA double-strand break (DSB) repair. The complex may facilitate opening of the processed DNA ends to aid in the recruitment of HerA and NurA. Rad50 controls the balance between DNA end bridging and DNA resection via ATP-dependent structural rearrangements of the Rad50/Mre11 complex. The polypeptide is DNA double-strand break repair Rad50 ATPase (Sulfolobus acidocaldarius (strain ATCC 33909 / DSM 639 / JCM 8929 / NBRC 15157 / NCIMB 11770)).